Here is a 600-residue protein sequence, read N- to C-terminus: Proline--tRNA ligase (600 aa).

It belongs to the class-II aminoacyl-tRNA synthetase family. ProS type 1 subfamily. In terms of assembly, homodimer.

The protein localises to the cytoplasm. The enzyme catalyses tRNA(Pro) + L-proline + ATP = L-prolyl-tRNA(Pro) + AMP + diphosphate. Its function is as follows. Catalyzes the attachment of proline to tRNA(Pro) in a two-step reaction: proline is first activated by ATP to form Pro-AMP and then transferred to the acceptor end of tRNA(Pro). As ProRS can inadvertently accommodate and process non-cognate amino acids such as alanine and cysteine, to avoid such errors it has two additional distinct editing activities against alanine. One activity is designated as 'pretransfer' editing and involves the tRNA(Pro)-independent hydrolysis of activated Ala-AMP. The other activity is designated 'posttransfer' editing and involves deacylation of mischarged Ala-tRNA(Pro). The misacylated Cys-tRNA(Pro) is not edited by ProRS. The sequence is that of Proline--tRNA ligase from Acaryochloris marina (strain MBIC 11017).